A 346-amino-acid polypeptide reads, in one-letter code: Sugar utilization regulatory protein IMP2 (346 aa).

Residues 1–29 (MQKSILLTKPDGTQSNLHSIKTETPTTVE) are compositionally biased toward polar residues. 2 disordered regions span residues 1 to 74 (MQKS…RVRE) and 91 to 132 (LRVV…DIEN). Thr-24 bears the Phosphothreonine mark. Basic residues predominate over residues 40–49 (RERGRSKKKR). Residues 96–132 (VDSEEEGEGNDEDDDDGDGDDMDEEESDEEQVSDIEN) show a composition bias toward acidic residues.

Its function is as follows. Controls the nucleo-mitochondrial dependence of galactose, maltose and raffinose utilization. Becomes essential in the absence of functioning mitochondria. This Saccharomyces cerevisiae (strain ATCC 204508 / S288c) (Baker's yeast) protein is Sugar utilization regulatory protein IMP2 (IMP2').